The following is a 75-amino-acid chain: Putative membrane protein insertion efficiency factor (75 aa).

The protein belongs to the UPF0161 family.

The protein localises to the cell membrane. Its function is as follows. Could be involved in insertion of integral membrane proteins into the membrane. The polypeptide is Putative membrane protein insertion efficiency factor (Bacillus cytotoxicus (strain DSM 22905 / CIP 110041 / 391-98 / NVH 391-98)).